Consider the following 1328-residue polypeptide: Protein turtle homolog B (1328 aa).

The N-terminal stretch at 1 to 20 (MIWYVATLIASVISTRGLVA) is a signal peptide. At 21–722 (QVAHGLREEP…DLTDDGLARP (702 aa)) the chain is on the extracellular side. Ig-like domains follow at residues 30–115 (PEFV…ECKV), 139–226 (PTFT…LLVQ), 228–320 (PPFI…AYLT), 324–415 (PARV…ARLV), and 420–504 (PYFT…THLT). Disulfide bonds link C45–C113 and C161–C208. N-linked (GlcNAc...) asparagine glycans are attached at residues N241 and N258. Cystine bridges form between C250/C303, C346/C397, and C442/C488. 2 consecutive Fibronectin type-III domains span residues 512-604 (APGS…TLAF) and 614-708 (LVTP…STDI). An N-linked (GlcNAc...) asparagine glycan is attached at N624. A helical transmembrane segment spans residues 723–743 (VLAGIVATICFLAAAILFSTL). At 744 to 1328 (AACFVNKQRK…EPPTTLPTSG (585 aa)) the chain is on the cytoplasmic side. Disordered regions lie at residues 758-817 (RKKD…EKEL), 914-1040 (PMSS…PEPW), and 1107-1328 (SPGR…PTSG). S775, S783, and S794 each carry phosphoserine. The span at 990–1001 (SPLSSVMSSPPL) shows a compositional bias: low complexity. 3 stretches are compositionally biased toward polar residues: residues 1018 to 1033 (ENAS…TPTG), 1129 to 1141 (LVSQ…TSQG), and 1199 to 1214 (SRLS…SRTG). Residue R1136 is modified to Omega-N-methylarginine. Phosphoserine is present on residues S1207 and S1215. The span at 1246 to 1273 (SFSRKSTPSSTGSPSQSSRSGSPSYRPT) shows a compositional bias: low complexity. Composition is skewed to pro residues over residues 1284-1295 (PSPPPGPAPPAP) and 1318-1328 (PEPPTTLPTSG).

Belongs to the immunoglobulin superfamily. Turtle family. Found in a complex with MAGI2 and NLGN2, where it interacts with MAGI2 (via PDZ 5 and PDZ 6 domains). In terms of processing, N-glycosylated and sialylated. Not significantly O-glycosylated. As to expression, detected primarily in brain, including cortex, hippocampus, cerebellum and striatum. Largely restricted to inhibitory GABAergic interneurons (at protein level).

It localises to the postsynaptic cell membrane. Its subcellular location is the postsynaptic density. Transmembrane protein which is abundantly expressed in interneurons, where it may regulate inhibitory synapse development. May mediate homophilic cell adhesion. The polypeptide is Protein turtle homolog B (Rattus norvegicus (Rat)).